We begin with the raw amino-acid sequence, 146 residues long: Hemoglobin subunit beta (146 aa).

At Val1 the chain carries N-acetylvaline. The region spanning 2–146 is the Globin domain; sequence DLTAEEKAAV…VANALAHKYH (145 aa). Residue Ser44 is modified to Phosphoserine. At Lys59 the chain carries N6-acetyllysine. His63 is a binding site for heme b. Lys82 carries the post-translational modification N6-acetyllysine. Residue His92 coordinates heme b. S-nitrosocysteine is present on Cys93. Lys144 carries the N6-acetyllysine modification.

It belongs to the globin family. In terms of assembly, heterotetramer of two alpha chains and two beta chains. Red blood cells.

Functionally, involved in oxygen transport from the lung to the various peripheral tissues. This Rhinoceros unicornis (Greater Indian rhinoceros) protein is Hemoglobin subunit beta (HBB).